The chain runs to 284 residues: Nucleotide-binding protein Sbal_3671 (284 aa).

8-15 (GRSGSGKS) contributes to the ATP binding site. 56–59 (DVRN) is a binding site for GTP.

The protein belongs to the RapZ-like family.

Functionally, displays ATPase and GTPase activities. The polypeptide is Nucleotide-binding protein Sbal_3671 (Shewanella baltica (strain OS155 / ATCC BAA-1091)).